The primary structure comprises 144 residues: Glutamyl-tRNA(Gln) amidotransferase subunit C, mitochondrial (144 aa).

The transit peptide at 1–17 directs the protein to the mitochondrion; sequence MFRRSVSFVRSHVLRSF.

The protein belongs to the GatC family. In terms of assembly, subunit of the heterotrimeric GatCAB amidotransferase (AdT) complex, composed of A, B and C subunits.

The protein resides in the mitochondrion. The catalysed reaction is L-glutamyl-tRNA(Gln) + L-glutamine + ATP + H2O = L-glutaminyl-tRNA(Gln) + L-glutamate + ADP + phosphate + H(+). Functionally, allows the formation of correctly charged Gln-tRNA(Gln) through the transamidation of misacylated Glu-tRNA(Gln) in the mitochondria. The reaction takes place in the presence of glutamine and ATP through an activated gamma-phospho-Glu-tRNA(Gln). This Ixodes scapularis (Black-legged tick) protein is Glutamyl-tRNA(Gln) amidotransferase subunit C, mitochondrial.